We begin with the raw amino-acid sequence, 150 residues long: Arginine repressor (150 aa).

It belongs to the ArgR family.

The protein localises to the cytoplasm. Its pathway is amino-acid biosynthesis; L-arginine biosynthesis [regulation]. Regulates arginine biosynthesis genes. The sequence is that of Arginine repressor from Clostridium beijerinckii (strain ATCC 51743 / NCIMB 8052) (Clostridium acetobutylicum).